We begin with the raw amino-acid sequence, 147 residues long: uncharacterized protein (147 aa).

The 137-residue stretch at 1-137 (MRDNTIGSLI…LYELMTKVHK (137 aa)) folds into the HTH marR-type domain. The H-T-H motif DNA-binding region spans 53 to 76 (QMELAEKVTVTQGGISRMLTRLEK).

This is an uncharacterized protein from Bacillus thuringiensis subsp. konkukian (strain 97-27).